A 93-amino-acid polypeptide reads, in one-letter code: Small ribosomal subunit protein uS19 (93 aa).

Belongs to the universal ribosomal protein uS19 family.

In terms of biological role, protein S19 forms a complex with S13 that binds strongly to the 16S ribosomal RNA. The sequence is that of Small ribosomal subunit protein uS19 from Nocardia farcinica (strain IFM 10152).